The chain runs to 38 residues: Large ribosomal subunit protein bL36c (38 aa).

This sequence belongs to the bacterial ribosomal protein bL36 family.

The protein localises to the plastid. Its subcellular location is the chloroplast. The protein is Large ribosomal subunit protein bL36c (rpl36) of Mesostigma viride (Green alga).